Reading from the N-terminus, the 709-residue chain is G1/S-specific cyclin-E (709 aa).

Disordered stretches follow at residues 1 to 30 (MGLN…NGEV), 43 to 149 (ISSS…NLSS), 162 to 205 (VDGQ…GSKQ), 221 to 289 (TVVT…PKHQ), and 642 to 709 (ALRA…RSNP). Polar residues-rich tracts occupy residues 7–29 (SVCS…SNGE), 61–70 (PSTSFSSASQ), and 91–106 (CDSQ…TSNG). 4 positions are modified to phosphoserine: Ser-114, Ser-115, Ser-117, and Ser-129. Residues 162 to 175 (VDGQSTQELLSIRS) show a composition bias toward polar residues. Phosphoserine occurs at positions 187, 192, 195, and 198. A compositionally biased stretch (pro residues) spans 187–199 (SPLPDSPDSPPSP). Over residues 228 to 258 (EDDDLLDDSCEDYSYDEDDEDDVEEEDDDVE) the composition is skewed to acidic residues. The segment covering 260 to 277 (YSSTISPASSGCSQQQAV) has biased composition (polar residues). The residue at position 651 (Thr-651) is a Phosphothreonine. Over residues 677–709 (SSTTTCCNTAASNKGGKSSSNNSVTSCSSRSNP) the composition is skewed to low complexity.

It belongs to the cyclin family. Cyclin E subfamily. Interacts with a member of the CDK2/CDK protein kinases to form a serine/threonine kinase holoenzyme complex. The cyclin subunit imparts substrate specificity to the complex. Interacts (via C-terminus) with Z600 (via C-terminus). As to expression, isoform II is ubiquitous in early embryos and, prior to mitosis 14, is rapidly degraded in all cells except the pole (germ) cells. Expressed during G1 phase in proliferating peripheral nervous system cells. Constitutive expression in embryonic cycles lacking a G1 phase.

It is found in the nucleus. In terms of biological role, essential for the control of the cell cycle at the G1/S (start) transition. Targeted by archipelago for degradation by the SFC ubiquitin ligase complex. The polypeptide is G1/S-specific cyclin-E (CycE) (Drosophila melanogaster (Fruit fly)).